Consider the following 604-residue polypeptide: FAD-linked oxidoreductase easE (604 aa).

An N-terminal signal peptide occupies residues 1-25 (MQFLLWSTGLVALLSWLIYTQETQS). Residues asparagine 47, asparagine 70, asparagine 106, and asparagine 196 are each glycosylated (N-linked (GlcNAc...) asparagine). Residues 125 to 308 (QGRIPLFTVG…TRATMRVFPD (184 aa)) enclose the FAD-binding PCMH-type domain.

Belongs to the oxygen-dependent FAD-linked oxidoreductase family. FAD serves as cofactor.

Its pathway is alkaloid biosynthesis; ergot alkaloid biosynthesis. Functionally, FAD-linked oxidoreductase; part of the gene cluster that mediates the biosynthesis of fungal ergot alkaloid. DmaW catalyzes the first step of ergot alkaloid biosynthesis by condensing dimethylallyl diphosphate (DMAP) and tryptophan to form 4-dimethylallyl-L-tryptophan. The second step is catalyzed by the methyltransferase easF that methylates 4-dimethylallyl-L-tryptophan in the presence of S-adenosyl-L-methionine, resulting in the formation of 4-dimethylallyl-L-abrine. The catalase easC and the FAD-dependent oxidoreductase easE then transform 4-dimethylallyl-L-abrine to chanoclavine-I which is further oxidized by easD in the presence of NAD(+), resulting in the formation of chanoclavine-I aldehyde. Chanoclavine-I aldehyde is the precursor of ergoamides and ergopeptines in Clavicipitaceae, and clavine-type alcaloids such as fumiclavine in Trichocomaceae. However, the metabolites downstream of chanoclavine-I aldehyde in Arthrodermataceae have not been identified yet. The chain is FAD-linked oxidoreductase easE from Trichophyton verrucosum (strain HKI 0517).